The chain runs to 188 residues: UPF0157 protein VC_A0354 (188 aa).

Belongs to the UPF0157 (GrpB) family.

The sequence is that of UPF0157 protein VC_A0354 from Vibrio cholerae serotype O1 (strain ATCC 39315 / El Tor Inaba N16961).